A 701-amino-acid chain; its full sequence is Glycine--tRNA ligase beta subunit (701 aa).

Belongs to the class-II aminoacyl-tRNA synthetase family. As to quaternary structure, tetramer of two alpha and two beta subunits.

The protein resides in the cytoplasm. It catalyses the reaction tRNA(Gly) + glycine + ATP = glycyl-tRNA(Gly) + AMP + diphosphate. This is Glycine--tRNA ligase beta subunit from Helicobacter pylori (strain HPAG1).